A 921-amino-acid polypeptide reads, in one-letter code: cGMP-dependent 3',5'-cyclic phosphodiesterase (921 aa).

An N-acetylmethionine modification is found at M1. 2 disordered regions span residues 1–21 and 177–198; these read MRRQ…PPGS and ESSV…DQKG. Over residues 177 to 188 the composition is skewed to polar residues; that stretch reads ESSVAPEATQNP. GAF domains lie at 220-357 and 389-528; these read DASS…STVL and DVSV…GISI. 3',5'-cyclic GMP-binding residues include S411, D426, I445, Y468, and T479. A PDEase domain is found at 558–882; that stretch reads SDDEYTKLLH…EHWTKVSHKF (325 aa). Catalysis depends on H636, which acts as the Proton donor. Zn(2+) is bound by residues H640, H676, D677, and D788. A Mg(2+)-binding site is contributed by D677.

This sequence belongs to the cyclic nucleotide phosphodiesterase family. PDE2 subfamily. In terms of assembly, homodimer. It depends on Zn(2+) as a cofactor. Mg(2+) serves as cofactor.

The protein localises to the cell membrane. Its subcellular location is the cytoplasm. The protein resides in the mitochondrion. It localises to the mitochondrion inner membrane. It is found in the mitochondrion outer membrane. The catalysed reaction is a nucleoside 3',5'-cyclic phosphate + H2O = a nucleoside 5'-phosphate + H(+). The enzyme catalyses 3',5'-cyclic GMP + H2O = GMP + H(+). It catalyses the reaction 3',5'-cyclic AMP + H2O = AMP + H(+). The 3',5'-cyclic-AMP phosphodiesterase activity is stimulated by 3',5'-cyclic GMP. CGMP-activated cyclic nucleotide phosphodiesterase with a dual-specificity for the second messengers cAMP and cGMP, which are key regulators of many important physiological processes. Has a higher efficiency with cGMP compared to cAMP. Plays a role in cell growth and migration. Its function is as follows. Regulates mitochondrial cAMP levels and respiration. Involved in the regulation of mitochondria morphology/dynamics and apoptotic cell death via local modulation of cAMP/PKA signaling in the mitochondrion, including the monitoring of local cAMP levels at the outer mitochondrial membrane and of PKA-dependent phosphorylation of DNM1L. In Bos taurus (Bovine), this protein is cGMP-dependent 3',5'-cyclic phosphodiesterase.